An 871-amino-acid polypeptide reads, in one-letter code: Leucine--tRNA ligase (871 aa).

The 'HIGH' region motif lies at 43 to 53; it reads PYPSGRIHIGH. The 'KMSKS' region motif lies at 629–633; the sequence is KMSKS. K632 contributes to the ATP binding site.

It belongs to the class-I aminoacyl-tRNA synthetase family.

Its subcellular location is the cytoplasm. It catalyses the reaction tRNA(Leu) + L-leucine + ATP = L-leucyl-tRNA(Leu) + AMP + diphosphate. The chain is Leucine--tRNA ligase from Chelativorans sp. (strain BNC1).